Here is a 264-residue protein sequence, read N- to C-terminus: Wtf element wtf11 (264 aa).

Polar residues predominate over residues 1 to 12 (MNSNYVPLTSSV). The tract at residues 1-26 (MNSNYVPLTSSVDVEEKMESENGVDL) is disordered. The next 4 helical transmembrane spans lie at 107-127 (LLFV…VIFG), 145-165 (LSWF…YDFW), 180-200 (WKNT…GFFV), and 217-237 (SLFA…FETL).

This sequence belongs to the WTF family.

It is found in the membrane. Its function is as follows. May act in meiotic drive. This chain is Wtf element wtf11, found in Schizosaccharomyces pombe (strain 972 / ATCC 24843) (Fission yeast).